A 421-amino-acid chain; its full sequence is Inner membrane protein YihN (421 aa).

Residues 1–44 (MLTKKKWALFSLLTLCGGTIYKLPSLKDAFYIPMQEYFHLTNGQ) are Periplasmic-facing. A helical transmembrane segment spans residues 45–65 (IGNAMSVNSFVTTVGFFLSIY). Topologically, residues 66–73 (FADKLPRR) are cytoplasmic. Residues 74 to 91 (YTMSFSLIATGLLGVYLT) form a helical membrane-spanning segment. Over 92 to 95 (TMPG) the chain is Periplasmic. Residues 96 to 118 (YWGILFVWALFGVTCDMMNWPVL) form a helical membrane-spanning segment. At 119–146 (LKSVSRLGNSEQQGRLFGFFETGRGIVD) the chain is on the cytoplasmic side. A helical transmembrane segment spans residues 147 to 167 (TVVAFSALAVFTWFGSGLLGF). A topological domain (periplasmic) is located at residue K168. A helical membrane pass occupies residues 169–189 (AGIWFYSLIVIAVGIIIFFVL). Residues 190-220 (NDKEEAPSVEVKKEDGASKNTSMTSVLKDKT) lie on the Cytoplasmic side of the membrane. Helical transmembrane passes span 221-241 (IWLI…LTFF) and 242-262 (IPFL…YGII). Residues 263-288 (NQYCLKMIGGPIGGMISDKILKSPSK) are Cytoplasmic-facing. 2 helical membrane-spanning segments follow: residues 289–309 (YLCY…MLPH) and 310–330 (ESMP…IVFT). Residues 331-354 (QRAVFFAPIGEAKIAENKTGAAMA) are Cytoplasmic-facing. Residues 355 to 375 (LGSFIGYAPAMFCFSLYGYIL) traverse the membrane as a helical segment. Topologically, residues 376–385 (DLNPGIIGYK) are periplasmic. The helical transmembrane segment at 386–406 (IVFGIMACFAFSGAVVSVMLV) threads the bilayer. Residues 407–421 (KRISQRKKEMLAAEA) are Cytoplasmic-facing.

This sequence belongs to the major facilitator superfamily.

It localises to the cell inner membrane. This is Inner membrane protein YihN (yihN) from Escherichia coli (strain K12).